The primary structure comprises 328 residues: Beta-ketoacyl-[acyl-carrier-protein] synthase III (328 aa).

Residues Cys-113 and His-252 contribute to the active site. An ACP-binding region spans residues 253–257 (QANLR). Asn-282 is an active-site residue.

Belongs to the thiolase-like superfamily. FabH family. Homodimer.

The protein resides in the cytoplasm. It catalyses the reaction malonyl-[ACP] + acetyl-CoA + H(+) = 3-oxobutanoyl-[ACP] + CO2 + CoA. Its pathway is lipid metabolism; fatty acid biosynthesis. In terms of biological role, catalyzes the condensation reaction of fatty acid synthesis by the addition to an acyl acceptor of two carbons from malonyl-ACP. Catalyzes the first condensation reaction which initiates fatty acid synthesis and may therefore play a role in governing the total rate of fatty acid production. Possesses both acetoacetyl-ACP synthase and acetyl transacylase activities. Its substrate specificity determines the biosynthesis of branched-chain and/or straight-chain of fatty acids. This Campylobacter fetus subsp. fetus (strain 82-40) protein is Beta-ketoacyl-[acyl-carrier-protein] synthase III.